A 352-amino-acid chain; its full sequence is Peptide chain release factor 1 (352 aa).

Gln-233 is subject to N5-methylglutamine. The disordered stretch occupies residues 288 to 309; sequence NAKDRKEQVGSGDRSERIRTYN. Residues 289–306 show a composition bias toward basic and acidic residues; it reads AKDRKEQVGSGDRSERIR.

This sequence belongs to the prokaryotic/mitochondrial release factor family. In terms of processing, methylated by PrmC. Methylation increases the termination efficiency of RF1.

It is found in the cytoplasm. Functionally, peptide chain release factor 1 directs the termination of translation in response to the peptide chain termination codons UAG and UAA. This chain is Peptide chain release factor 1, found in Helicobacter pylori (strain HPAG1).